The sequence spans 305 residues: GTPase Era (305 aa).

Positions 13 to 181 constitute an Era-type G domain; the sequence is RCGFVAIVGR…ESAVGRFLPE (169 aa). The tract at residues 21–28 is G1; the sequence is GRPNVGKS. Residue 21–28 participates in GTP binding; that stretch reads GRPNVGKS. The interval 47–51 is G2; sequence QTTRH. Positions 68–71 are G3; sequence DTPG. GTP-binding positions include 68–72 and 130–133; these read DTPGM and NKVD. Residues 130 to 133 are G4; sequence NKVD. The interval 160 to 162 is G5; sequence LSA. One can recognise a KH type-2 domain in the interval 204 to 288; the sequence is VREKITRQLG…MLRLWVKVKR (85 aa).

It belongs to the TRAFAC class TrmE-Era-EngA-EngB-Septin-like GTPase superfamily. Era GTPase family. Monomer.

The protein localises to the cytoplasm. The protein resides in the cell inner membrane. Its function is as follows. An essential GTPase that binds both GDP and GTP, with rapid nucleotide exchange. Plays a role in 16S rRNA processing and 30S ribosomal subunit biogenesis and possibly also in cell cycle regulation and energy metabolism. This Marinobacter nauticus (strain ATCC 700491 / DSM 11845 / VT8) (Marinobacter aquaeolei) protein is GTPase Era.